The sequence spans 358 residues: Gentisate 1,2-dioxygenase (358 aa).

In terms of domain architecture, Cupin type-1 spans 239 to 358 (QTLRQRAEND…AFNFYAEAEP (120 aa)).

This sequence belongs to the gentisate 1,2-dioxygenase family. Homotetramer.

The enzyme catalyses 2,5-dihydroxybenzoate + O2 = 3-maleylpyruvate + H(+). It functions in the pathway aromatic compound metabolism; naphthalene degradation. Inhibited by 2,2'-dipyridyl. In terms of biological role, catalyzes the oxygen-dependent ring fission of gentisate between the carboxyl and proximal hydroxyl groups at positions 1 and 2 of the aromatic ring to form maleylpyruvate. No activity with cathechol and protecatechuate as substrates. Part of a 3-hydroxybenzoic acid-degradation pathway. This chain is Gentisate 1,2-dioxygenase (gdoA), found in Haloferax sp.